Reading from the N-terminus, the 362-residue chain is Spermidine/putrescine import ATP-binding protein PotA (362 aa).

Residues 4–235 form the ABC transporter domain; that stretch reads IKLDHITKQY…PVNDFVARFI (232 aa). ATP is bound at residue 37–44; that stretch reads GPSGSGKT.

It belongs to the ABC transporter superfamily. Spermidine/putrescine importer (TC 3.A.1.11.1) family. The complex is composed of two ATP-binding proteins (PotA), two transmembrane proteins (PotB and PotC) and a solute-binding protein (PotD).

Its subcellular location is the cell membrane. It carries out the reaction ATP + H2O + polyamine-[polyamine-binding protein]Side 1 = ADP + phosphate + polyamineSide 2 + [polyamine-binding protein]Side 1.. Functionally, part of the ABC transporter complex PotABCD involved in spermidine/putrescine import. Responsible for energy coupling to the transport system. The sequence is that of Spermidine/putrescine import ATP-binding protein PotA from Lactobacillus delbrueckii subsp. bulgaricus (strain ATCC BAA-365 / Lb-18).